Here is a 101-residue protein sequence, read N- to C-terminus: Apolipoprotein C-II (101 aa).

Residues 1-22 form the signal peptide; it reads MGTRFLLALFLVLLVLGFEVQG. Positions 66 to 74 are lipid binding; it reads TVDEKLRDM. A lipoprotein lipase cofactor region spans residues 78-101; the sequence is STAAMSTYAGILTDQVLSMLKGEE.

Belongs to the apolipoprotein C2 family. Proapolipoprotein C-II is synthesized as a sialic acid containing glycoprotein which is subsequently desialylated prior to its proteolytic processing. Post-translationally, proapolipoprotein C-II, the major form found in plasma undergoes proteolytic cleavage of its N-terminal hexapeptide to generate apolipoprotein C-II, which occurs as the minor form in plasma.

It is found in the secreted. Its function is as follows. Component of chylomicrons, very low-density lipoproteins (VLDL), low-density lipoproteins (LDL), and high-density lipoproteins (HDL) in plasma. Plays an important role in lipoprotein metabolism as an activator of lipoprotein lipase. Both proapolipoprotein C-II and apolipoprotein C-II can activate lipoprotein lipase. In Plecturocebus moloch (Dusky titi monkey), this protein is Apolipoprotein C-II (APOC2).